Here is a 497-residue protein sequence, read N- to C-terminus: Angiopoietin-1 (497 aa).

An N-terminal signal peptide occupies residues 1–19; that stretch reads MTVFLSFAFLAAILTHIGC. 5 N-linked (GlcNAc...) asparagine glycosylation sites follow: Asn92, Asn122, Asn154, Asn243, and Asn294. A coiled-coil region spans residues 158–256; that stretch reads RLEIQLLENS…LQKQQLELMD (99 aa). The Fibrinogen C-terminal domain occupies 276–496; it reads KEEEKPFRDC…STTMMIRPLD (221 aa). Disulfide bonds link Cys285/Cys314 and Cys438/Cys451.

Homooligomer. Interacts with TEK/TIE2. Interacts with SVEP1/polydom. Interacts with THBD; this interaction significantly inhibits the generation of activated PC and TAFIa/CPB2 by the thrombin/thrombomodulin complex.

It is found in the secreted. In terms of biological role, binds and activates TIE2 receptor by inducing its tyrosine phosphorylation. Implicated in endothelial developmental processes later and distinct from that of VEGF. Appears to play a crucial role in mediating reciprocal interactions between the endothelium and surrounding matrix and mesenchyme. Mediates blood vessel maturation/stability. It may play an important role in the heart early development. This Canis lupus familiaris (Dog) protein is Angiopoietin-1 (ANGPT1).